The chain runs to 336 residues: tRNA-dihydrouridine(20/20a) synthase (336 aa).

FMN contacts are provided by residues 24-26 and glutamine 77; that span reads PMM. The Proton donor role is filled by cysteine 107. FMN-binding positions include lysine 146, histidine 178, 218 to 220, and 240 to 241; these read NGG and GR.

This sequence belongs to the Dus family. DusA subfamily. It depends on FMN as a cofactor.

The enzyme catalyses 5,6-dihydrouridine(20) in tRNA + NADP(+) = uridine(20) in tRNA + NADPH + H(+). The catalysed reaction is 5,6-dihydrouridine(20) in tRNA + NAD(+) = uridine(20) in tRNA + NADH + H(+). It carries out the reaction 5,6-dihydrouridine(20a) in tRNA + NADP(+) = uridine(20a) in tRNA + NADPH + H(+). It catalyses the reaction 5,6-dihydrouridine(20a) in tRNA + NAD(+) = uridine(20a) in tRNA + NADH + H(+). Catalyzes the synthesis of 5,6-dihydrouridine (D), a modified base found in the D-loop of most tRNAs, via the reduction of the C5-C6 double bond in target uridines. Specifically modifies U20 and U20a in tRNAs. In Pseudomonas syringae pv. tomato (strain ATCC BAA-871 / DC3000), this protein is tRNA-dihydrouridine(20/20a) synthase.